The following is a 582-amino-acid chain: MLKPPIITSNDNNNTKVAENLNDLNNKGKMSGQQIESFSPWHAQTSSSAVTGTSELFGSTYAMLSDHSVYPEQWSGKQLSQSVLFEQPQIQPLVGNSYDPPVRFDPPYAYRATATGYMPTVPGLSTNSSPYYPRTSGYAAGQQFYAPSLSGVPNTQQLILAAQVAQASNVQQQLQQQVLRPEPLRPATQKSTNGVHRSTSNSSAETLRNNSVSAATVSPSDDNSLNSPALTSSGSAGSGTPPLGIDLNNTDLESGDEERVMCMACRGVYPSRRSLTGHIGRNEKCREIIGRNYLDALAQGVNPPIPGTDAAIKSGAITTGADGMSPVCPFCDRFISHYKGNIRRHINQCRKSAEPMKRHRVEAHEKQSPKKKVKKEQNEMYQHEYNDHDSSSMSGGMMNSPKISPPSSSFYGANSSDLCSPGEYSNSAYEPYPTPMLENTERTSTETAVLQDAYICEDCDFVTVYKGNMKRHLNTCHPQPEFKSLKEWDQKLEGMRASNLGISGDRLQERLAAHKANSSRGRKPRKKKENNTEESESIDFKNILNSETGALLESLASSSSSMGGYSNGNNFQPPPPPPPMLL.

Disordered stretches follow at residues 179 to 251 (LRPE…NNTD) and 352 to 377 (SAEP…KKEQ). The segment covering 188–226 (TQKSTNGVHRSTSNSSAETLRNNSVSAATVSPSDDNSLN) has biased composition (polar residues). Residues 227–244 (SPALTSSGSAGSGTPPLG) show a composition bias toward low complexity. Over residues 352 to 368 (SAEPMKRHRVEAHEKQS) the composition is skewed to basic and acidic residues. Residues 454-477 (YICEDCDFVTVYKGNMKRHLNTCH) form a C2H2-type; Degenerate zinc finger. The disordered stretch occupies residues 513-582 (AHKANSSRGR…PPPPPPPMLL (70 aa)). Residues 551-570 (LLESLASSSSSMGGYSNGNN) are compositionally biased toward low complexity. Positions 572 to 582 (QPPPPPPPMLL) are enriched in pro residues.

As to quaternary structure, may interact with swsn-9; the interaction promotes hypodermal differentiation. As to expression, expressed in hypodermal seam cells, the somatic gonad and vulval precursor cells, body wall muscle and head neurons.

It is found in the nucleus. Its function is as follows. DNA-binding protein which binds to the promoters of let-60, lin-14 and lin-28, possibly to regulate genes involved in hypodermal and vulval development. Together with miRNAs mir-84 and let-7 may direct terminal differentiation of the seam cells, exit from the molting cycle, and vulva formation. Does not regulate the expression of mir-84. May promote hypodermal differentiation in association with swsn-9, a component of SWI/SNF chromatin remodeling complexes. The polypeptide is Zinc finger protein somi-1 (Caenorhabditis elegans).